Consider the following 251-residue polypeptide: Transcription factor bHLH144 (251 aa).

Disordered regions lie at residues 1 to 20 (MQNNQFPHFSDEVGDRNMHN), 130 to 161 (YEENDDNEGEEDGGDSEEVSTARTSSRDYGNT), and 173 to 202 (NNNNNNNSRKQSLSGSASSSNNDGKGRKKM). The segment covering 9-18 (FSDEVGDRNM) has biased composition (basic and acidic residues). The segment covering 130 to 147 (YEENDDNEGEEDGGDSEE) has biased composition (acidic residues). Polar residues predominate over residues 148–161 (VSTARTSSRDYGNT). The span at 173–192 (NNNNNNNSRKQSLSGSASSS) shows a compositional bias: low complexity. Residues 186–235 (SGSASSSNNDGKGRKKMKKMMGVLRRIVPGGEQMNTACVLDEAVQYLKSL) enclose the bHLH domain.

Homodimer. Interacts with LHW.

It localises to the nucleus. The polypeptide is Transcription factor bHLH144 (BHLH144) (Arabidopsis thaliana (Mouse-ear cress)).